We begin with the raw amino-acid sequence, 428 residues long: Immunoglobulin superfamily member 11 (428 aa).

An N-terminal signal peptide occupies residues 1-22 (MTRRRSALASWLLLSLLGVAAS). In terms of domain architecture, Ig-like V-type spans 23–136 (LEVSESPGSV…DRGGRNIGVT (114 aa)). Topologically, residues 23 to 239 (LEVSESPGSV…LQVISPQPRS (217 aa)) are extracellular. Intrachain disulfides connect cysteine 44-cysteine 120 and cysteine 165-cysteine 215. Asparagine 102 is a glycosylation site (N-linked (GlcNAc...) asparagine). The Ig-like C2-type domain occupies 144–234 (PSAPNCQIQG…TCLLDLQVIS (91 aa)). Residues 240–260 (VGVIAGAVGTGAVLIVICLAL) traverse the membrane as a helical segment. Topologically, residues 261 to 428 (TSGAFFYWRS…PAQSRAGSLV (168 aa)) are cytoplasmic. At arginine 375 the chain carries Omega-N-methylarginine.

N-glycosylated.

It localises to the cell membrane. Functionally, functions as a cell adhesion molecule through homophilic interaction. Stimulates cell growth. In Rattus norvegicus (Rat), this protein is Immunoglobulin superfamily member 11 (Igsf11).